Reading from the N-terminus, the 309-residue chain is Tagatose-6-phosphate kinase (309 aa).

Belongs to the carbohydrate kinase PfkB family. LacC subfamily.

The catalysed reaction is D-tagatofuranose 6-phosphate + ATP = D-tagatofuranose 1,6-bisphosphate + ADP + H(+). Its pathway is carbohydrate metabolism; D-tagatose 6-phosphate degradation; D-glyceraldehyde 3-phosphate and glycerone phosphate from D-tagatose 6-phosphate: step 1/2. In Streptococcus pyogenes serotype M1, this protein is Tagatose-6-phosphate kinase.